The sequence spans 374 residues: Carbamoyl phosphate synthase small chain (374 aa).

The CPSase stretch occupies residues 1 to 183 (MVLADGQMIW…QNGYSVVDNQ (183 aa)). 3 residues coordinate L-glutamine: serine 41, glycine 235, and glycine 237. The region spanning 187 to 374 (HVVAIDYGLK…FIDLIAKERP (188 aa)) is the Glutamine amidotransferase type-1 domain. The Nucleophile role is filled by cysteine 264. Positions 265, 268, 306, 308, and 309 each coordinate L-glutamine. Residues histidine 348 and glutamate 350 contribute to the active site.

This sequence belongs to the CarA family. Composed of two chains; the small (or glutamine) chain promotes the hydrolysis of glutamine to ammonia, which is used by the large (or ammonia) chain to synthesize carbamoyl phosphate. Tetramer of heterodimers (alpha,beta)4.

It carries out the reaction hydrogencarbonate + L-glutamine + 2 ATP + H2O = carbamoyl phosphate + L-glutamate + 2 ADP + phosphate + 2 H(+). It catalyses the reaction L-glutamine + H2O = L-glutamate + NH4(+). It functions in the pathway amino-acid biosynthesis; L-arginine biosynthesis; carbamoyl phosphate from bicarbonate: step 1/1. It participates in pyrimidine metabolism; UMP biosynthesis via de novo pathway; (S)-dihydroorotate from bicarbonate: step 1/3. In terms of biological role, small subunit of the glutamine-dependent carbamoyl phosphate synthetase (CPSase). CPSase catalyzes the formation of carbamoyl phosphate from the ammonia moiety of glutamine, carbonate, and phosphate donated by ATP, constituting the first step of 2 biosynthetic pathways, one leading to arginine and/or urea and the other to pyrimidine nucleotides. The small subunit (glutamine amidotransferase) binds and cleaves glutamine to supply the large subunit with the substrate ammonia. The sequence is that of Carbamoyl phosphate synthase small chain from Zymomonas mobilis subsp. mobilis (strain ATCC 31821 / ZM4 / CP4).